We begin with the raw amino-acid sequence, 319 residues long: Ribosomal RNA large subunit methyltransferase F (319 aa).

Belongs to the methyltransferase superfamily. METTL16/RlmF family.

It is found in the cytoplasm. It carries out the reaction adenosine(1618) in 23S rRNA + S-adenosyl-L-methionine = N(6)-methyladenosine(1618) in 23S rRNA + S-adenosyl-L-homocysteine + H(+). Its function is as follows. Specifically methylates the adenine in position 1618 of 23S rRNA. The polypeptide is Ribosomal RNA large subunit methyltransferase F (Aliivibrio fischeri (strain ATCC 700601 / ES114) (Vibrio fischeri)).